A 152-amino-acid polypeptide reads, in one-letter code: Large ribosomal subunit protein uL15 (152 aa).

The segment at 1-66 (MLQLHTIKPN…PLHRRLPKKG (66 aa)) is disordered. Positions 24 to 36 (ESSGLGKTCGKGN) are enriched in gly residues.

Belongs to the universal ribosomal protein uL15 family. As to quaternary structure, part of the 50S ribosomal subunit.

In terms of biological role, binds to the 23S rRNA. The chain is Large ribosomal subunit protein uL15 from Akkermansia muciniphila (strain ATCC BAA-835 / DSM 22959 / JCM 33894 / BCRC 81048 / CCUG 64013 / CIP 107961 / Muc).